The chain runs to 309 residues: GTP cyclohydrolase MptA (309 aa).

It belongs to the GTP cyclohydrolase IV family. In terms of assembly, homodimer. It depends on Fe(2+) as a cofactor.

The enzyme catalyses GTP + H2O = 7,8-dihydroneopterin 2',3'-cyclic phosphate + formate + diphosphate + H(+). Its pathway is cofactor biosynthesis; 5,6,7,8-tetrahydromethanopterin biosynthesis. Functionally, converts GTP to 7,8-dihydro-D-neopterin 2',3'-cyclic phosphate, the first intermediate in the biosynthesis of coenzyme methanopterin. The polypeptide is GTP cyclohydrolase MptA (Haloquadratum walsbyi (strain DSM 16790 / HBSQ001)).